The primary structure comprises 575 residues: Cyclic nucleotide-gated channel alpha-4 (575 aa).

Over 1-38 the chain is Cytoplasmic; it reads MSQDSKVKTTESTPPAPTKARKWLPVLDPSGDYYYWWL. The chain crosses the membrane as a helical span at residues 39-60; sequence NTMVFPIMYNLIIVVCRACFPD. Residues 61 to 70 lie on the Extracellular side of the membrane; it reads LQHSYLVAWF. The chain crosses the membrane as a helical span at residues 71–91; it reads VLDYTSDLLYLLDIGVRFHTG. Residues 92-116 lie on the Cytoplasmic side of the membrane; the sequence is FLEQGILVVDKSMIASRYVRTWSFL. Residues 117 to 135 form a helical membrane-spanning segment; the sequence is LDLASLVPTDAAYVQLGPH. Topologically, residues 136–140 are extracellular; it reads IPTLR. The helical transmembrane segment at 141-159 threads the bilayer; sequence LNRFLRVPRLFEAFDRTET. The Cytoplasmic portion of the chain corresponds to 160-166; it reads RTAYPNA. The tract at residues 164 to 272 is ion conduction pathway; the sequence is PNAFRIAKLM…GSMSSVIYNM (109 aa). The chain crosses the membrane as a helical span at residues 167 to 190; it reads FRIAKLMIYIFVVIHWNSCLYFAL. The Extracellular segment spans residues 191 to 213; that stretch reads SRYLGFGRDAWVYPDPAQPGFER. 2 helical membrane-spanning segments follow: residues 214 to 248 and 249 to 273; these read LRRQYLYSFYFSTLILTTVGDTPLPAREEEYLFMV and GDFLLAVMGFATIMGSMSSVIYNMN. A selectivity filter region spans residues 231–234; it reads TVGD. The C-linker stretch occupies residues 274-350; it reads TADAAFYPDH…STLSRVQIFQ (77 aa). The Cytoplasmic segment spans residues 274-575; the sequence is TADAAFYPDH…AGQEGPSGLE (302 aa). The short motif at 292 to 302 is the IQ-type element; it reads LQHVNRRLERR. 348 to 471 contributes to the a nucleoside 3',5'-cyclic phosphate binding site; the sequence is IFQNCEASLL…AVMEEKGREI (124 aa). Residues 354 to 474 form a cyclic nucleotide-binding domain region; sequence ASLLEELVLK…EEKGREILLK (121 aa). 3',5'-cyclic GMP is bound by residues G414, S417, R430, and T431. 3',5'-cyclic AMP contacts are provided by R430 and T431. The stretch at 493–547 forms a coiled coil; sequence TESRLKGLDQQLDDLQTKFARLLAELESSALKIAYRIERLEWQTREWPMPDDMGE. The disordered stretch occupies residues 536 to 575; it reads TREWPMPDDMGEADDEAEPGEGTSKDGEEKAGQEGPSGLE. Positions 544–554 are enriched in acidic residues; that stretch reads DMGEADDEAEP. The span at 558-567 shows a compositional bias: basic and acidic residues; that stretch reads TSKDGEEKAG.

This sequence belongs to the cyclic nucleotide-gated cation channel (TC 1.A.1.5) family. CNGA4 subfamily. The olfactory cyclic nucleotide-gated channel is an heterotetramer composed of CNGA2, CNGA4 and CNGB1b subunits with 2:1:1 stoichiometry. As to expression, expressed in the olfactory epithelium.

The protein localises to the cell projection. Its subcellular location is the cilium membrane. It carries out the reaction Ca(2+)(in) = Ca(2+)(out). The catalysed reaction is Na(+)(in) = Na(+)(out). It catalyses the reaction K(+)(in) = K(+)(out). The enzyme catalyses NH4(+)(in) = NH4(+)(out). It carries out the reaction Rb(+)(in) = Rb(+)(out). The catalysed reaction is Li(+)(in) = Li(+)(out). It catalyses the reaction Cs(+)(in) = Cs(+)(out). Ca(2+)-calmodulin exerts its inhibitory effect in cAMP sensitivity by binding to IQ-like motif of CNGA4 and preferably binds to the channel in the closed state. Inhibition by PIP3 of the CNG channel probably occurs via CGNA2 binding. Functionally, pore-forming subunit of the olfactory cyclic nucleotide-gated channel. Operates in the cilia of olfactory sensory neurons where chemical stimulation of the odorant is converted to an electrical signal. Mediates odorant-induced cAMP-dependent Ca(2+) influx triggering neuron depolarization. The rise of intracellular Ca(2+) levels potentiates the olfactory response by activating Ca(2+)-dependent Cl(-) channels, but it also serves as a negative feedback signal to desensitize the channel for rapid adaptation to odorants. Conducts cGMP- and cAMP-gated ion currents, with permeability for monovalent and divalent cations. Conducts cAMP- and cGMP-gated ion currents, with permeability for monovalent and divalent cations. May conduct nitric oxide-gated Ca(2+) currents relevant to neurons of vomeronasal organ, a system involved in the perception of pheromones. This is Cyclic nucleotide-gated channel alpha-4 from Mus musculus (Mouse).